A 316-amino-acid chain; its full sequence is Metal cation efflux system protein CzcD (316 aa).

Topologically, residues 1 to 16 are cytoplasmic; sequence MGAGHSHDHPGGNERS. Residues 17–37 form a helical membrane-spanning segment; that stretch reads LKIALALTGTFLIAEVVGGVM. Residues 38-46 lie on the Periplasmic side of the membrane; it reads TKSLALISD. Residues 47 to 67 traverse the membrane as a helical segment; the sequence is AAHMLTDTVALAIALAAIAIA. Topologically, residues 68–81 are cytoplasmic; sequence KRPADKKRTFGYYR. Residues 82–102 traverse the membrane as a helical segment; sequence FEILAAAFNALLLFGVAIYIL. Over 103–114 the chain is Periplasmic; that stretch reads YEAYLRLKSPPQ. A helical transmembrane segment spans residues 115–135; that stretch reads IESTGMFVVAVLGLIINLISM. The Cytoplasmic segment spans residues 136-151; the sequence is RMLSSGQSSSLNVKGA. Helical transmembrane passes span 152-172 and 174-194; these read YLEVWSDLLGSVGVIAGAIII and FTGWAWVDSAIAVLIGLWVLP. The Cytoplasmic portion of the chain corresponds to 195 to 316; the sequence is RTWILLKSSL…GSKSLAAGGN (122 aa).

This sequence belongs to the cation diffusion facilitator (CDF) transporter (TC 2.A.4) family. SLC30A subfamily.

It localises to the cell inner membrane. Its activity is regulated as follows. Efflux is inhibited by FCCP. In terms of biological role, mediates a low-level metal ion resistance, probably by efflux of cations from the cytoplasm into the periplasm. Also mediates resistance to cobalt, cadmium and zinc via regulation of the Czc system. May repress expression of the Czc system by an export of the inducing cations. Binds and transports zinc. Can also bind cobalt, copper and nickel. The polypeptide is Metal cation efflux system protein CzcD (czcD) (Cupriavidus metallidurans (strain ATCC 43123 / DSM 2839 / NBRC 102507 / CH34) (Ralstonia metallidurans)).